Consider the following 67-residue polypeptide: Large ribosomal subunit protein bL35 (67 aa).

This sequence belongs to the bacterial ribosomal protein bL35 family.

In Paramagnetospirillum magneticum (strain ATCC 700264 / AMB-1) (Magnetospirillum magneticum), this protein is Large ribosomal subunit protein bL35.